A 568-amino-acid chain; its full sequence is Proline--tRNA ligase (568 aa).

This sequence belongs to the class-II aminoacyl-tRNA synthetase family. ProS type 1 subfamily. As to quaternary structure, homodimer.

Its subcellular location is the cytoplasm. It catalyses the reaction tRNA(Pro) + L-proline + ATP = L-prolyl-tRNA(Pro) + AMP + diphosphate. Functionally, catalyzes the attachment of proline to tRNA(Pro) in a two-step reaction: proline is first activated by ATP to form Pro-AMP and then transferred to the acceptor end of tRNA(Pro). As ProRS can inadvertently accommodate and process non-cognate amino acids such as alanine and cysteine, to avoid such errors it has two additional distinct editing activities against alanine. One activity is designated as 'pretransfer' editing and involves the tRNA(Pro)-independent hydrolysis of activated Ala-AMP. The other activity is designated 'posttransfer' editing and involves deacylation of mischarged Ala-tRNA(Pro). The misacylated Cys-tRNA(Pro) is not edited by ProRS. This chain is Proline--tRNA ligase, found in Listeria monocytogenes serotype 4a (strain HCC23).